A 302-amino-acid polypeptide reads, in one-letter code: 4-hydroxy-tetrahydrodipicolinate synthase (302 aa).

T55 provides a ligand contact to pyruvate. The active-site Proton donor/acceptor is Y143. The active-site Schiff-base intermediate with substrate is K171. I213 serves as a coordination point for pyruvate.

This sequence belongs to the DapA family. Homotetramer; dimer of dimers.

Its subcellular location is the cytoplasm. The catalysed reaction is L-aspartate 4-semialdehyde + pyruvate = (2S,4S)-4-hydroxy-2,3,4,5-tetrahydrodipicolinate + H2O + H(+). It participates in amino-acid biosynthesis; L-lysine biosynthesis via DAP pathway; (S)-tetrahydrodipicolinate from L-aspartate: step 3/4. Catalyzes the condensation of (S)-aspartate-beta-semialdehyde [(S)-ASA] and pyruvate to 4-hydroxy-tetrahydrodipicolinate (HTPA). This is 4-hydroxy-tetrahydrodipicolinate synthase from Psychrobacter sp. (strain PRwf-1).